Reading from the N-terminus, the 200-residue chain is A-type ATP synthase subunit E (200 aa).

The protein belongs to the V-ATPase E subunit family. In terms of assembly, has multiple subunits with at least A(3), B(3), C, D, E, F, H, I and proteolipid K(x).

The protein localises to the cell membrane. Component of the A-type ATP synthase that produces ATP from ADP in the presence of a proton gradient across the membrane. The protein is A-type ATP synthase subunit E of Methanopyrus kandleri (strain AV19 / DSM 6324 / JCM 9639 / NBRC 100938).